The sequence spans 3901 residues: Nonribosomal peptide synthetase opaA (3901 aa).

Residues 248–641 (HNAQHHPSVV…HRKDNQIKIR (394 aa)) form an adenylation 1 region. The region spanning 780–854 (LPVTANEIVV…DMATRLTRIK (75 aa)) is the Carrier 1 domain. Residue S815 is modified to O-(pantetheine 4'-phosphoryl)serine. The condensation 1 stretch occupies residues 891 to 1164 (DAYPCSALQE…IATVPIRINL (274 aa)). The tract at residues 1328–1725 (QSHAQKTPKS…GRIGNQVKLR (398 aa)) is adenylation 2. The 79-residue stretch at 1858–1936 (RTPLDTERDL…QIAAQAATRA (79 aa)) folds into the Carrier 2 domain. S1895 is modified (O-(pantetheine 4'-phosphoryl)serine). Residues 1953–2261 (KLTPIQQLFF…KDARRRLTRN (309 aa)) form an epimerase region. The interval 2403-2826 (ENLYPCAPIQ…LVSTDHKRLL (424 aa)) is condensation 2. Residues 2846 to 3243 (QQHVRETPDA…GRKDSQIKIR (398 aa)) form an adenylation 3 region. One can recognise a Carrier 3 domain in the interval 3375–3451 (LPSTAGEQLL…ALAARSRSKD (77 aa)). S3412 is modified (O-(pantetheine 4'-phosphoryl)serine). Residues 3509–3837 (HHFSFAVEGK…EDLKTHFTLN (329 aa)) form a condensation 3 region.

The protein belongs to the NRP synthetase family.

Nonribosomal peptide synthetase; part of the gene cluster that mediates the biosynthesis of oxepinamides, derivatives of anthranilyl-containing tripeptides that share an oxepin ring and a fused pyrimidinone moiety. The nonribosomal peptide synthetase (NRPS) opaA assembles the quinazolinone core with D-Phe incorporation. The first adenylation domain (A1) of opaA loads and activates anthranilic acid whereas the second A domain (A2) is for activating of L-Phe, which is then converted to D-form by the E domain. The third A domain (A3) is responsible for L-Ile activation and the terminal condensation domain C3 for cyclization and releasing the NRPS product protuboxepin K. The cytochrome P450 monooxygenase opaB then catalyzes alone the oxepin ring formation to convert protuboxepin K into protuboxepin A. The flavoenzyme opaC installs subsequently one hydroxyl group at the oxepin ring, accompanied by double bond migration, to form 15-epi-oxepinamide E. The epimerase opaE changes the D-Phe residue back to L-form, leading to oxepinamide E, which is further methylated at the hydroxyl group at C-12 by the O-methyltransferase OpaF to yield oxepinamide F. The sequence is that of Nonribosomal peptide synthetase opaA from Aspergillus ustus.